The sequence spans 348 residues: Fructose-1,6-bisphosphatase class 1 (348 aa).

Residues glutamate 107, aspartate 129, isoleucine 131, and aspartate 132 each coordinate Mg(2+). Substrate-binding positions include 132 to 135 (DGSS), asparagine 224, tyrosine 252, and lysine 282. Glutamate 288 is a Mg(2+) binding site.

It belongs to the FBPase class 1 family. As to quaternary structure, homotetramer. It depends on Mg(2+) as a cofactor.

The protein resides in the cytoplasm. It catalyses the reaction beta-D-fructose 1,6-bisphosphate + H2O = beta-D-fructose 6-phosphate + phosphate. It functions in the pathway carbohydrate biosynthesis; Calvin cycle. This chain is Fructose-1,6-bisphosphatase class 1, found in Microcystis aeruginosa (strain NIES-843 / IAM M-2473).